The following is a 173-amino-acid chain: Alkyl hydroperoxide reductase AhpD (173 aa).

Residue C131 is the Proton donor of the active site. A disulfide bridge connects residues C131 and C134. The active-site Cysteine sulfenic acid (-SOH) intermediate is the C134.

It belongs to the AhpD family.

The enzyme catalyses N(6)-[(R)-dihydrolipoyl]-L-lysyl-[lipoyl-carrier protein] + a hydroperoxide = N(6)-[(R)-lipoyl]-L-lysyl-[lipoyl-carrier protein] + an alcohol + H2O. Functionally, antioxidant protein with alkyl hydroperoxidase activity. Required for the reduction of the AhpC active site cysteine residues and for the regeneration of the AhpC enzyme activity. The polypeptide is Alkyl hydroperoxide reductase AhpD (Maricaulis maris (strain MCS10) (Caulobacter maris)).